The primary structure comprises 61 residues: Sodium/potassium-transporting ATPase subunit gamma (61 aa).

A helical transmembrane segment spans residues 24 to 44 (KGGLIFAAIAFVVGMLIIFSG).

This sequence belongs to the FXYD family. As to quaternary structure, regulatory subunit of the sodium/potassium-transporting ATPase which is composed of a catalytic alpha subunit, an auxiliary non-catalytic beta subunit and an additional regulatory subunit.

Its subcellular location is the membrane. May be involved in forming the receptor site for cardiac glycoside binding or may modulate the transport function of the sodium ATPase. This is Sodium/potassium-transporting ATPase subunit gamma (fxyd2) from Xenopus laevis (African clawed frog).